Reading from the N-terminus, the 101-residue chain is MNKSKRPFTKSKRSFRRRLPPIQSGDRIDYRNMSLISRFISEQGKILSRRVNRVTLKQQRLITIAIKQARILSLLPFLNNQKQFERSESTPRTTSLRTRKK.

Basic residues predominate over residues 1-19; it reads MNKSKRPFTKSKRSFRRRL. A disordered region spans residues 1–23; it reads MNKSKRPFTKSKRSFRRRLPPIQ.

This sequence belongs to the bacterial ribosomal protein bS18 family. In terms of assembly, part of the 30S ribosomal subunit.

It localises to the plastid. It is found in the chloroplast. This chain is Small ribosomal subunit protein bS18c, found in Draba nemorosa (Woodland whitlowgrass).